A 130-amino-acid chain; its full sequence is Small ribosomal subunit protein uS9 (130 aa).

Belongs to the universal ribosomal protein uS9 family.

In Serratia proteamaculans (strain 568), this protein is Small ribosomal subunit protein uS9.